The sequence spans 165 residues: Nascent polypeptide-associated complex subunit beta (165 aa).

The 65-residue stretch at 33-97 (TTDDKRLQST…PQTKKLQDIL (65 aa)) folds into the NAC-A/B domain. The tract at residues 120–165 (QKQAPGAGDVPATIQEEDDDDDVPDLVVGETFETPATEEAPKAAAS) is disordered. The span at 134-143 (QEEDDDDDVP) shows a compositional bias: acidic residues. The span at 144–165 (DLVVGETFETPATEEAPKAAAS) shows a compositional bias: low complexity.

The protein belongs to the NAC-beta family. In terms of assembly, part of the nascent polypeptide-associated complex (NAC).

The sequence is that of Nascent polypeptide-associated complex subunit beta from Arabidopsis thaliana (Mouse-ear cress).